Consider the following 167-residue polypeptide: SAR-endolysin (167 aa).

Residues 11-31 traverse the membrane as a helical; Signal-anchor for type II membrane protein segment; that stretch reads VIAAISGGAIAIASVLITGPG. Catalysis depends on proton donor/acceptor residues E37 and D46.

This sequence belongs to the glycosyl hydrolase 24 family.

The protein resides in the host cell inner membrane. It catalyses the reaction Hydrolysis of (1-&gt;4)-beta-linkages between N-acetylmuramic acid and N-acetyl-D-glucosamine residues in a peptidoglycan and between N-acetyl-D-glucosamine residues in chitodextrins.. Functionally, signal-arrest-release (SAR) endolysin with lysozyme activity that degrades host peptidoglycans and participates with the pinholin and spanin proteins in the sequential events which lead to programmed host cell lysis releasing the mature viral particles. Once the pinholin has permeabilized the host cell membrane, the SAR-endolysin is released into the periplasm where it breaks down the peptidoglycan layer. The sequence is that of SAR-endolysin (19) from Bacteriophage PS34.